Consider the following 634-residue polypeptide: Dachshund homolog 2 (634 aa).

The DACHbox-N stretch occupies residues 76 to 162 (RMVDMHGVKV…LITRKDFETL (87 aa)). Disordered regions lie at residues 171-194 (RKRQ…KRSL), 244-286 (LQGN…SGPQ), and 378-416 (IPES…MDHH). A compositionally biased stretch (polar residues) spans 244–269 (LQGNGSQNGTESEPDDLNSTTGGSES). Over residues 396–412 (SQTSSHPSSSVSSSPSQ) the composition is skewed to low complexity. Residues 488–568 (SSVETLLTNI…KAKRKLQEAL (81 aa)) form a DACHbox-C region. A coiled-coil region spans residues 494 to 588 (LTNIQGLLKV…EQALKQATSG (95 aa)).

It belongs to the DACH/dachshund family. Interacts with SIX6. Interacts with EYA2. As to expression, expressed in embryo, and at lower levels in the newborn.

It localises to the nucleus. In terms of biological role, transcription factor that is involved in regulation of organogenesis. Seems to be a regulator for SIX1 and SIX6. Seems to act as a corepressor of SIX6 in regulating proliferation by directly repressing cyclin-dependent kinase inhibitors, including the p27Kip1 promoter. Is recruited with SIX6 to the p27Kip1 promoter in embryonal retina. SIX6 corepression also seems to involve NCOR1, TBL1, HDAC1 and HDAC3. May be involved together with PAX3, SIX1, and EYA2 in regulation of myogenesis. In the developing somite, expression of DACH2 and PAX3 is regulated by the overlying ectoderm, and DACH2 and PAX3 positively regulate each other's expression. Probably binds to DNA via its DACHbox-N domain. This is Dachshund homolog 2 (Dach2) from Mus musculus (Mouse).